Here is a 310-residue protein sequence, read N- to C-terminus: HPr kinase/phosphorylase 1 (310 aa).

Residues His-139 and Lys-160 contribute to the active site. 154-161 (GQSGVGKS) lines the ATP pocket. Ser-161 contributes to the Mg(2+) binding site. The active-site Proton acceptor; for phosphorylation activity. Proton donor; for dephosphorylation activity is Asp-178. Positions 202–211 (LEIRGLGIIN) are important for the catalytic mechanism of both phosphorylation and dephosphorylation. Glu-203 provides a ligand contact to Mg(2+). The active site involves Arg-244. Residues 265–270 (PVRPGR) are important for the catalytic mechanism of dephosphorylation.

Belongs to the HPrK/P family. In terms of assembly, homohexamer. Mg(2+) serves as cofactor.

It carries out the reaction [HPr protein]-L-serine + ATP = [HPr protein]-O-phospho-L-serine + ADP + H(+). The enzyme catalyses [HPr protein]-O-phospho-L-serine + phosphate + H(+) = [HPr protein]-L-serine + diphosphate. In terms of biological role, catalyzes the ATP- as well as the pyrophosphate-dependent phosphorylation of a specific serine residue in HPr, a phosphocarrier protein of the phosphoenolpyruvate-dependent sugar phosphotransferase system (PTS). HprK/P also catalyzes the pyrophosphate-producing, inorganic phosphate-dependent dephosphorylation (phosphorolysis) of seryl-phosphorylated HPr (P-Ser-HPr). The two antagonistic activities of HprK/P are regulated by several intracellular metabolites, which change their concentration in response to the absence or presence of rapidly metabolisable carbon sources (glucose, fructose, etc.) in the growth medium. Also phosphorylates/dephosphorylates the HPr-like catabolite repression protein crh on a specific serine residue. Therefore, by controlling the phosphorylation state of HPr and crh, HPrK/P is a sensor enzyme that plays a major role in the regulation of carbon metabolism and sugar transport: it mediates carbon catabolite repression (CCR), and regulates PTS-catalyzed carbohydrate uptake and inducer exclusion. This is HPr kinase/phosphorylase 1 (hprK1) from Oceanobacillus iheyensis (strain DSM 14371 / CIP 107618 / JCM 11309 / KCTC 3954 / HTE831).